Here is a 278-residue protein sequence, read N- to C-terminus: Large ribosomal subunit protein uL2 (278 aa).

The disordered stretch occupies residues 214–278; sequence WLGKRPHNRG…IMRSRHQRKS (65 aa).

The protein belongs to the universal ribosomal protein uL2 family. In terms of assembly, part of the 50S ribosomal subunit. Forms a bridge to the 30S subunit in the 70S ribosome.

Functionally, one of the primary rRNA binding proteins. Required for association of the 30S and 50S subunits to form the 70S ribosome, for tRNA binding and peptide bond formation. It has been suggested to have peptidyltransferase activity; this is somewhat controversial. Makes several contacts with the 16S rRNA in the 70S ribosome. This Chelativorans sp. (strain BNC1) protein is Large ribosomal subunit protein uL2.